The following is a 163-amino-acid chain: MALNLQDKQAIVAEVNEAAKGALSAVIADSRGVTVEKMTELRKSAREAGVTMRVVRNTLLRRAVEGTDYECLKDTFVGPTLIAFSNEHPGEAARLFKEFAKANDKFEIKGAAFEGKIQDVEFLATLPTYEEAIARLMGTMKEAAAGKLARTFAALRDKLQEAA.

It belongs to the universal ribosomal protein uL10 family. In terms of assembly, part of the ribosomal stalk of the 50S ribosomal subunit. The N-terminus interacts with L11 and the large rRNA to form the base of the stalk. The C-terminus forms an elongated spine to which L12 dimers bind in a sequential fashion forming a multimeric L10(L12)X complex.

Functionally, forms part of the ribosomal stalk, playing a central role in the interaction of the ribosome with GTP-bound translation factors. The sequence is that of Large ribosomal subunit protein uL10 from Haemophilus influenzae (strain 86-028NP).